The sequence spans 598 residues: Nuclear receptor subfamily 4 group A member 2 (598 aa).

A disordered region spans residues Met1–Tyr22. Low complexity predominate over residues Tyr8–Tyr22. The segment at residues Glu260–Thr335 is a DNA-binding region (nuclear receptor). NR C4-type zinc fingers lie at residues Cys263 to Cys283 and Cys299 to Cys323. A Bipartite nuclear localization signal (NLS1) motif is present at residues Phe287–Arg314. The disordered stretch occupies residues Ser337–Pro361. Residues Leu338–Lys350 carry the Nuclear localization signal (NLS1) motif. Positions Pro352–Pro361 are enriched in pro residues. The NR LBD domain occupies Pro360–Thr595. The nuclear export sequence (NES1) signature appears at Phe443–Ala452. Positions Gln568–Lys577 match the nuclear export sequence (NES2) motif.

Belongs to the nuclear hormone receptor family. NR4 subfamily. Interacts with SFPQ, NCOR2, SIN3A and HADC1. The interaction with NCOR2 increases in the absence of PITX3. Interacts with PER2. In terms of tissue distribution, expressed in a number of cell lines of T-cell, B-cell and fibroblast origin. Strong expression in brain tissue.

The protein resides in the cytoplasm. It localises to the nucleus. Functionally, transcriptional regulator which is important for the differentiation and maintenance of meso-diencephalic dopaminergic (mdDA) neurons during development. It is crucial for expression of a set of genes such as SLC6A3, SLC18A2, TH and DRD2 which are essential for development of mdDA neurons. In Homo sapiens (Human), this protein is Nuclear receptor subfamily 4 group A member 2 (NR4A2).